The primary structure comprises 146 residues: Large ribosomal subunit protein uL15 (146 aa).

Basic residues-rich tracts occupy residues 1-13 and 22-38; these read MIRKRRKITRMRG and SKKRRGAGHRGGRGQAG. The interval 1–38 is disordered; it reads MIRKRRKITRMRGSRTVGGGCSKKRRGAGHRGGRGQAG.

The protein belongs to the universal ribosomal protein uL15 family. Part of the 50S ribosomal subunit.

Functionally, binds to the 23S rRNA. The chain is Large ribosomal subunit protein uL15 from Methanothermobacter thermautotrophicus (strain ATCC 29096 / DSM 1053 / JCM 10044 / NBRC 100330 / Delta H) (Methanobacterium thermoautotrophicum).